We begin with the raw amino-acid sequence, 942 residues long: Cilia- and flagella-associated protein 69 (942 aa).

A compositionally biased stretch (low complexity) spans 1 to 16; that stretch reads MSTAEASATTADAAEA. Residues 1-25 form a disordered region; that stretch reads MSTAEASATTADAAEAGGRTKTGSP.

Expressed in ciliated olfactory sensory neurons (at protein level). Expressed in testis, specifically in sperm (at protein level).

It is found in the cell projection. The protein resides in the cilium. Its subcellular location is the flagellum. Functionally, cilium- and flagellum-associated protein. In the olfactory epithelium, regulates the speed of activation and termination of the odor response and thus contributes to the robustness of olfactory transduction pathways. Required for sperm flagellum assembly and stability. In Mus musculus (Mouse), this protein is Cilia- and flagella-associated protein 69.